Reading from the N-terminus, the 199-residue chain is Recombination protein RecR (199 aa).

The C4-type zinc finger occupies 58–73 (CVNCGNIGTGDLCEIC). Positions 81-176 (GEICVVEDVA…TLSSLAQGVP (96 aa)) constitute a Toprim domain.

This sequence belongs to the RecR family.

May play a role in DNA repair. It seems to be involved in an RecBC-independent recombinational process of DNA repair. It may act with RecF and RecO. In Jannaschia sp. (strain CCS1), this protein is Recombination protein RecR.